The primary structure comprises 330 residues: AA9 family lytic polysaccharide monooxygenase E (330 aa).

The signal sequence occupies residues 1 to 20 (MRSTLVTGLIAGLLSQQAAA). Residues histidine 21 and histidine 99 each coordinate Cu(2+). A disulfide bridge connects residues cysteine 58 and cysteine 193. O2 is bound by residues histidine 179 and glutamine 188. Cu(2+) is bound at residue tyrosine 190. Residues 293 to 330 (CSVAKYQQCGGTGYTGCTSCASGSTCSAVSPPYYSQCV) form the CBM1 domain.

Belongs to the polysaccharide monooxygenase AA9 family. Cu(2+) serves as cofactor.

It localises to the secreted. The catalysed reaction is [(1-&gt;4)-beta-D-glucosyl]n+m + reduced acceptor + O2 = 4-dehydro-beta-D-glucosyl-[(1-&gt;4)-beta-D-glucosyl]n-1 + [(1-&gt;4)-beta-D-glucosyl]m + acceptor + H2O.. In terms of biological role, lytic polysaccharide monooxygenase (LPMO) that depolymerizes crystalline and amorphous polysaccharides via the oxidation of scissile alpha- or beta-(1-4)-glycosidic bonds, yielding exclusively C1 oxidation products. Catalysis by LPMOs requires the reduction of the active-site copper from Cu(II) to Cu(I) by a reducing agent and H(2)O(2) or O(2) as a cosubstrate. This is AA9 family lytic polysaccharide monooxygenase E (gh61-5) from Neurospora crassa (strain ATCC 24698 / 74-OR23-1A / CBS 708.71 / DSM 1257 / FGSC 987).